We begin with the raw amino-acid sequence, 1673 residues long: Protein TIC 214 (1673 aa).

The next 6 membrane-spanning stretches (helical) occupy residues 32–52, 70–90, 93–113, 130–150, 170–190, and 218–238; these read AGLY…ILLI, LILG…YIAF, PYTL…GNNL, LEIL…TCIF, MVFL…VLMC, and FFLV…IQSL. Composition is skewed to basic and acidic residues over residues 264–276 and 283–298; these read LKKS…GKST and SHEK…SKLE. Disordered regions lie at residues 264–302, 547–611, 1120–1146, and 1370–1433; these read LKKS…NEDE, VVFD…YSIR, NKQS…TDNL, and QQNQ…SEDD. Residues 562 to 586 show a composition bias toward polar residues; that stretch reads DNGNIQNNSSDKTINPQNNLTNLKP. Residues 597 to 611 show a composition bias toward basic and acidic residues; sequence TTEKEPKDDKSYSIR. Residues 1120 to 1135 are compositionally biased toward polar residues; that stretch reads NKQSLQKRNSSGNSNL. Residues 1370 to 1379 show a composition bias toward low complexity; the sequence is QQNQTTTKMN. Basic and acidic residues-rich tracts occupy residues 1380 to 1399 and 1406 to 1423; these read TETK…KKTE and TKNK…KETE.

The protein belongs to the TIC214 family. In terms of assembly, part of the Tic complex.

Its subcellular location is the plastid. The protein localises to the chloroplast inner membrane. Involved in protein precursor import into chloroplasts. May be part of an intermediate translocation complex acting as a protein-conducting channel at the inner envelope. This Cuscuta gronovii (Common dodder) protein is Protein TIC 214.